Consider the following 198-residue polypeptide: Cytochrome c oxidase subunit 2 (198 aa).

Residues 1–13 traverse the membrane as a helical segment; the sequence is AICSLVLYLLTLM. Over 14–26 the chain is Mitochondrial matrix; that stretch reads LMEKLSSNTVDAQ. The helical transmembrane segment at 27-54 threads the bilayer; sequence EVELIWTILPAIVLILLALPSLQILYMM. The Mitochondrial intermembrane portion of the chain corresponds to 55 to 198; it reads DEIDEPDLTL…WSSLLSTSSL (144 aa). The Cu cation site is built by His128, Cys163, Glu165, Cys167, His171, and Met174. A Mg(2+)-binding site is contributed by Glu165.

This sequence belongs to the cytochrome c oxidase subunit 2 family. As to quaternary structure, component of the cytochrome c oxidase (complex IV, CIV), a multisubunit enzyme composed of 14 subunits. The complex is composed of a catalytic core of 3 subunits MT-CO1, MT-CO2 and MT-CO3, encoded in the mitochondrial DNA, and 11 supernumerary subunits COX4I, COX5A, COX5B, COX6A, COX6B, COX6C, COX7A, COX7B, COX7C, COX8 and NDUFA4, which are encoded in the nuclear genome. The complex exists as a monomer or a dimer and forms supercomplexes (SCs) in the inner mitochondrial membrane with NADH-ubiquinone oxidoreductase (complex I, CI) and ubiquinol-cytochrome c oxidoreductase (cytochrome b-c1 complex, complex III, CIII), resulting in different assemblies (supercomplex SCI(1)III(2)IV(1) and megacomplex MCI(2)III(2)IV(2)). Found in a complex with TMEM177, COA6, COX18, COX20, SCO1 and SCO2. Interacts with TMEM177 in a COX20-dependent manner. Interacts with COX20. Interacts with COX16. Cu cation serves as cofactor.

It is found in the mitochondrion inner membrane. The catalysed reaction is 4 Fe(II)-[cytochrome c] + O2 + 8 H(+)(in) = 4 Fe(III)-[cytochrome c] + 2 H2O + 4 H(+)(out). Its function is as follows. Component of the cytochrome c oxidase, the last enzyme in the mitochondrial electron transport chain which drives oxidative phosphorylation. The respiratory chain contains 3 multisubunit complexes succinate dehydrogenase (complex II, CII), ubiquinol-cytochrome c oxidoreductase (cytochrome b-c1 complex, complex III, CIII) and cytochrome c oxidase (complex IV, CIV), that cooperate to transfer electrons derived from NADH and succinate to molecular oxygen, creating an electrochemical gradient over the inner membrane that drives transmembrane transport and the ATP synthase. Cytochrome c oxidase is the component of the respiratory chain that catalyzes the reduction of oxygen to water. Electrons originating from reduced cytochrome c in the intermembrane space (IMS) are transferred via the dinuclear copper A center (CU(A)) of subunit 2 and heme A of subunit 1 to the active site in subunit 1, a binuclear center (BNC) formed by heme A3 and copper B (CU(B)). The BNC reduces molecular oxygen to 2 water molecules using 4 electrons from cytochrome c in the IMS and 4 protons from the mitochondrial matrix. This chain is Cytochrome c oxidase subunit 2 (MT-CO2), found in Tinamus major (Great tinamou).